A 65-amino-acid polypeptide reads, in one-letter code: Beta-defensin 17 (65 aa).

Positions 1-19 are cleaved as a signal peptide; it reads MKFHLLFFILLFSITILTG. Disulfide bonds link cysteine 35–cysteine 63, cysteine 42–cysteine 56, and cysteine 46–cysteine 64.

Belongs to the beta-defensin family.

The protein resides in the secreted. Functionally, has antibacterial activity. The protein is Beta-defensin 17 (Defb17) of Rattus norvegicus (Rat).